The primary structure comprises 80 residues: Cell division protein ZapB (80 aa).

Positions 3-80 (FEVLEQLESK…ALLGKMDEVE (78 aa)) form a coiled coil. The span at 41–53 (ANELRSQREELEQ) shows a compositional bias: basic and acidic residues. The segment at 41 to 60 (ANELRSQREELEQKSQQAQQ) is disordered.

Belongs to the ZapB family. As to quaternary structure, homodimer. The ends of the coiled-coil dimer bind to each other, forming polymers. Interacts with FtsZ.

The protein resides in the cytoplasm. Non-essential, abundant cell division factor that is required for proper Z-ring formation. It is recruited early to the divisome by direct interaction with FtsZ, stimulating Z-ring assembly and thereby promoting cell division earlier in the cell cycle. Its recruitment to the Z-ring requires functional FtsA or ZipA. The chain is Cell division protein ZapB from Vibrio campbellii (strain ATCC BAA-1116).